We begin with the raw amino-acid sequence, 151 residues long: Ribosomal RNA large subunit methyltransferase H (151 aa).

Residues Leu-73, Gly-100, and 119-124 contribute to the S-adenosyl-L-methionine site; that span reads LSKMTL.

This sequence belongs to the RNA methyltransferase RlmH family. As to quaternary structure, homodimer.

Its subcellular location is the cytoplasm. The catalysed reaction is pseudouridine(1915) in 23S rRNA + S-adenosyl-L-methionine = N(3)-methylpseudouridine(1915) in 23S rRNA + S-adenosyl-L-homocysteine + H(+). Specifically methylates the pseudouridine at position 1915 (m3Psi1915) in 23S rRNA. The polypeptide is Ribosomal RNA large subunit methyltransferase H (Campylobacter lari (strain RM2100 / D67 / ATCC BAA-1060)).